The following is a 569-amino-acid chain: Methionine--tRNA ligase (569 aa).

Positions 11–21 match the 'HIGH' region motif; sequence PYINGIKHLGN. Zn(2+) contacts are provided by Cys-143, Cys-146, Cys-156, and Cys-159. Positions 342–346 match the 'KMSKS' region motif; the sequence is KFSTS. Thr-345 serves as a coordination point for ATP.

This sequence belongs to the class-I aminoacyl-tRNA synthetase family. MetG type 1 subfamily. In terms of assembly, monomer. Requires Zn(2+) as cofactor.

It localises to the cytoplasm. It catalyses the reaction tRNA(Met) + L-methionine + ATP = L-methionyl-tRNA(Met) + AMP + diphosphate. Is required not only for elongation of protein synthesis but also for the initiation of all mRNA translation through initiator tRNA(fMet) aminoacylation. This chain is Methionine--tRNA ligase, found in Caulobacter vibrioides (strain ATCC 19089 / CIP 103742 / CB 15) (Caulobacter crescentus).